Consider the following 97-residue polypeptide: MAVLTGLTFGGNTWTPKFAESIDKDKCIGCGRCIKVCGYPVLDLKALNEEGEFVEDEEDDEIERKVMVVAHPENCIGCQACARICPKNCYTHNPLEN.

4Fe-4S ferredoxin-type domains are found at residues phenylalanine 18–leucine 47 and lysine 65–leucine 95. Positions 27, 30, 33, 37, 75, 78, 81, and 85 each coordinate [4Fe-4S] cluster.

In terms of assembly, homodimer. The cofactor is [4Fe-4S] cluster.

Ferredoxins are iron-sulfur proteins that transfer electrons in a wide variety of metabolic reactions. This Nostoc sp. (strain PCC 7120 / SAG 25.82 / UTEX 2576) protein is Ferredoxin-3 (fdxB).